The sequence spans 118 residues: Large ribosomal subunit protein bL20 (118 aa).

The protein belongs to the bacterial ribosomal protein bL20 family.

Functionally, binds directly to 23S ribosomal RNA and is necessary for the in vitro assembly process of the 50S ribosomal subunit. It is not involved in the protein synthesizing functions of that subunit. The protein is Large ribosomal subunit protein bL20 (rplT) of Thermotoga maritima (strain ATCC 43589 / DSM 3109 / JCM 10099 / NBRC 100826 / MSB8).